A 501-amino-acid chain; its full sequence is Armadillo repeat-containing protein 6 (501 aa).

A Phosphoserine modification is found at serine 64. ARM repeat units follow at residues 220 to 264 (GVLP…HAHN), 274 to 318 (KGLK…DLGG), 319 to 369 (LSIL…RAGG), and 370 to 412 (TESI…VEGG). Position 263 is a pros-methylhistidine (histidine 263).

The protein belongs to the ARMC6 family. Post-translationally, methylated at His-263 by METTL9.

This chain is Armadillo repeat-containing protein 6 (ARMC6), found in Homo sapiens (Human).